Here is a 535-residue protein sequence, read N- to C-terminus: Flavin-containing monooxygenase 2 (535 aa).

Ala2 is subject to N-acetylalanine. FAD-binding positions include 9–13 (GAGVS), Glu32, 40–41 (VW), and 61–62 (NT). Residues 60–61 (TN) and 195–198 (SGSD) contribute to the NADP(+) site. A Glycyl lysine isopeptide (Lys-Gly) (interchain with G-Cter in SUMO) cross-link involves residue Lys492. Residues 510–530 (FSVSFLLKILGLLAVVVAFFC) traverse the membrane as a helical segment.

This sequence belongs to the FMO family. Requires FAD as cofactor. The cofactor is Mg(2+). In terms of tissue distribution, expressed in lung (at protein level). Expressed predominantly in lung, and at a much lesser extent in kidney. Also expressed in fetal lung, but not in liver, kidney and brain.

It is found in the microsome membrane. It localises to the endoplasmic reticulum membrane. Catalyzes the oxidative metabolism of numerous xenobiotics, including mainly therapeutic drugs and insecticides that contain a soft nucleophile, most commonly nitrogen and sulfur and participates to their bioactivation. Specifically catalyzes S-oxygenation of sulfur derived compounds such as thioureas-derived compounds, thioetherorganophosphates to their sulfenic acid. In vitro, catalyzes S-oxygenation of the second-line antitubercular drugs thiacetazone (TAZ) and ethionamide (ETA), forming a sulfinic acid and a carbodiimide via a postulated sulfenic acid intermediate. Also catalyzes S-oxygenation of the thioether-containing organophosphate insecticides, phorate and disulfoton. The polypeptide is Flavin-containing monooxygenase 2 (Homo sapiens (Human)).